The chain runs to 192 residues: Shikimate kinase (192 aa).

27–32 (GTGKTT) is a binding site for ATP. Residue threonine 31 coordinates Mg(2+). Aspartate 49, arginine 73, and glycine 95 together coordinate substrate. ATP is bound at residue arginine 133. Position 152 (arginine 152) interacts with substrate.

Belongs to the shikimate kinase family. In terms of assembly, monomer. It depends on Mg(2+) as a cofactor.

It is found in the cytoplasm. The enzyme catalyses shikimate + ATP = 3-phosphoshikimate + ADP + H(+). It participates in metabolic intermediate biosynthesis; chorismate biosynthesis; chorismate from D-erythrose 4-phosphate and phosphoenolpyruvate: step 5/7. Catalyzes the specific phosphorylation of the 3-hydroxyl group of shikimic acid using ATP as a cosubstrate. This Hahella chejuensis (strain KCTC 2396) protein is Shikimate kinase.